A 193-amino-acid polypeptide reads, in one-letter code: Peptidyl-tRNA hydrolase (193 aa).

Tyr16 contacts tRNA. The Proton acceptor role is filled by His21. TRNA contacts are provided by Phe67, Asn69, and Asn115.

The protein belongs to the PTH family. As to quaternary structure, monomer.

Its subcellular location is the cytoplasm. It carries out the reaction an N-acyl-L-alpha-aminoacyl-tRNA + H2O = an N-acyl-L-amino acid + a tRNA + H(+). In terms of biological role, hydrolyzes ribosome-free peptidyl-tRNAs (with 1 or more amino acids incorporated), which drop off the ribosome during protein synthesis, or as a result of ribosome stalling. Functionally, catalyzes the release of premature peptidyl moieties from peptidyl-tRNA molecules trapped in stalled 50S ribosomal subunits, and thus maintains levels of free tRNAs and 50S ribosomes. The protein is Peptidyl-tRNA hydrolase of Baumannia cicadellinicola subsp. Homalodisca coagulata.